Here is a 151-residue protein sequence, read N- to C-terminus: Ribosome maturation factor RimP (151 aa).

It belongs to the RimP family.

Its subcellular location is the cytoplasm. Its function is as follows. Required for maturation of 30S ribosomal subunits. The protein is Ribosome maturation factor RimP of Aliivibrio fischeri (strain ATCC 700601 / ES114) (Vibrio fischeri).